We begin with the raw amino-acid sequence, 510 residues long: Dermokine (510 aa).

Residues 1-21 (MKLKGSLACLLLFLLLGSGEA) form the signal peptide. The disordered stretch occupies residues 117 to 362 (VDPAHKSWQG…SSGEGEAVSG (246 aa)). Residues 124-137 (WQGTPGSNGAWGTN) show a composition bias toward polar residues. Residues 141-158 (PSGGHGIPGSQGSSGGPG) are compositionally biased toward gly residues. The span at 194-221 (GANSQGTSPQPGSVRSNNNRNTECTTPP) shows a compositional bias: polar residues. 3 stretches are compositionally biased toward gly residues: residues 222-231 (GSGGSSGNSG), 240-254 (TNGG…GGSN), and 264-292 (SNGG…GGSN). Composition is skewed to low complexity over residues 293 to 303 (AGSSGSSGSSS) and 319 to 332 (PSPS…SGVR). Positions 344–355 (GGSGGQGQGSSG) are enriched in gly residues.

It belongs to the dermokine family. As to quaternary structure, homooligomer. Seems to be able to homodimerize and homotrimerize. Post-translationally, O-glycosylated.

It is found in the secreted. Functionally, may act as a soluble regulator of keratinocyte differentiation. The sequence is that of Dermokine (DMKN) from Bos taurus (Bovine).